Here is a 353-residue protein sequence, read N- to C-terminus: UPF0283 membrane protein YcjF (353 aa).

Basic and acidic residues predominate over residues 1 to 19 (MSEPLKPRIDFAEPLKEEP). The tract at residues 1 to 35 (MSEPLKPRIDFAEPLKEEPTSAFKAQQTFSEAESR) is disordered. Topologically, residues 1 to 69 (MSEPLKPRID…LRPKRSLWRK (69 aa)) are periplasmic. Residues 70–90 (MVMGGLALFGASVVGQGVQWT) form a helical membrane-spanning segment. Residues 91–99 (MNAWQTQDW) are Cytoplasmic-facing. Residues 100–120 (VALGGCAAGALIVGAGVGSVV) form a helical membrane-spanning segment. The Periplasmic portion of the chain corresponds to 121 to 212 (TEWRRLWRLR…ARREISRFAA (92 aa)). The chain crosses the membrane as a helical span at residues 213–233 (ESTLMIAVSPLALVDMAFIAW). Residues 234–353 (RNLRLINRIA…LQKSKSSPEK (120 aa)) lie on the Cytoplasmic side of the membrane.

The protein belongs to the UPF0283 family.

It localises to the cell inner membrane. This is UPF0283 membrane protein YcjF (ycjF) from Salmonella typhimurium (strain LT2 / SGSC1412 / ATCC 700720).